Reading from the N-terminus, the 513-residue chain is HMG box-containing protein 1 (513 aa).

Residues 151–181 (RPPPVSSAKSGPAFPHDHWKEETPVRHERAN) form a disordered region. A compositionally biased stretch (basic and acidic residues) spans 165 to 181 (PHDHWKEETPVRHERAN). The AXH domain occupies 202 to 343 (WCNSWPSTVW…PPGHPDAINF (142 aa)). The segment at residues 433-501 (CKRPMNAFML…EQKRLNPDCW (69 aa)) is a DNA-binding region (HMG box).

In terms of assembly, binds TCF4. Binds RB1. Binds the second PAH repeat of SIN3A. Post-translationally, ubiquitinated by the CTLH E3 ubiquitin-protein ligase complex, leading to subsequent proteasomal degradation. In terms of tissue distribution, highly expressed in liver, adipose tissue, lung, brain, spleen, kidney, skeletal muscle and heart.

Its subcellular location is the nucleus. In terms of biological role, transcriptional repressor that binds to the promoter region of target genes. Plays a role in the regulation of the cell cycle and of the Wnt pathway. Binds preferentially to the sequence 5'-TTCATTCATTCA-3'. Binding to the histone H1.0 promoter is enhanced by interaction with RB1. Disrupts the interaction between DNA and TCF4. This Rattus norvegicus (Rat) protein is HMG box-containing protein 1 (Hbp1).